We begin with the raw amino-acid sequence, 72 residues long: MESAARRSGGGVLEGFYRLVMRRTPVYVTFVIAGALLGERAVDYGVKTLWEKNNVGKRYEDISVLGQRPVDE.

The Mitochondrial matrix portion of the chain corresponds to 1–27 (MESAARRSGGGVLEGFYRLVMRRTPVY). A helical membrane pass occupies residues 28 to 53 (VTFVIAGALLGERAVDYGVKTLWEKN). At 54-72 (NVGKRYEDISVLGQRPVDE) the chain is on the mitochondrial intermembrane side.

This sequence belongs to the UQCR10/QCR9 family. Component of the ubiquinol-cytochrome c oxidoreductase (cytochrome b-c1 complex, complex III, CIII), a multisubunit enzyme composed of 3 respiratory subunits cytochrome b, cytochrome c1 and Rieske protein, 2 core protein subunits, and additional low-molecular weight protein subunits. The complex exists as an obligatory dimer and forms supercomplexes (SCs) in the inner mitochondrial membrane with cytochrome c oxidase (complex IV, CIV).

The protein localises to the mitochondrion inner membrane. In terms of biological role, component of the ubiquinol-cytochrome c oxidoreductase, a multisubunit transmembrane complex that is part of the mitochondrial electron transport chain which drives oxidative phosphorylation. The respiratory chain contains 3 multisubunit complexes succinate dehydrogenase (complex II, CII), ubiquinol-cytochrome c oxidoreductase (cytochrome b-c1 complex, complex III, CIII) and cytochrome c oxidase (complex IV, CIV), that cooperate to transfer electrons derived from NADH and succinate to molecular oxygen, creating an electrochemical gradient over the inner membrane that drives transmembrane transport and the ATP synthase. The cytochrome b-c1 complex catalyzes electron transfer from ubiquinol to cytochrome c, linking this redox reaction to translocation of protons across the mitochondrial inner membrane, with protons being carried across the membrane as hydrogens on the quinol. In the process called Q cycle, 2 protons are consumed from the matrix, 4 protons are released into the intermembrane space and 2 electrons are passed to cytochrome c. This is Cytochrome b-c1 complex subunit 9 from Solanum tuberosum (Potato).